Consider the following 417-residue polypeptide: Metal-binding activator 1 (417 aa).

The copper-fist DNA-binding region spans 1–40 (MIIFNGNKYACASCIRGHRSSTCRHSHRMLIKVRTRGRPS). Positions 11, 14, 23, and 25 each coordinate Zn(2+). Disordered regions lie at residues 128–198 (FLRK…IFTP) and 216–242 (YNSS…AAPH). A Phosphoserine modification is found at S143. Residues 153 to 178 (SEKKERSRLQQEPIRHFSNCCKKDKS) show a composition bias toward basic and acidic residues. 2 stretches are compositionally biased toward polar residues: residues 179–190 (QNPASNGKTNKA) and 228–238 (ETLTPQSTTTI). Tandem repeats lie at residues 264-279 (CSCE…CLIH) and 322-337 (CICP…CFSH). The segment at 264–337 (CSCEDESCPC…NCTCDGCFSH (74 aa)) is 2 X 16 AA repeat of C-X-C-X(4)-C-X-C-X-X-C-X-X-H.

Its subcellular location is the nucleus. Regulatory protein involved in Cu/Fe utilization and stress resistance. Involved in basal level transcription of FRE1 and H(2)O(2)-induced transcription of CTT1. Regulates the transcription of CTR1 and CTR3 via the copper ion responsive elements in their promoters. Required for degradation of CTR1. The polypeptide is Metal-binding activator 1 (MAC1) (Saccharomyces cerevisiae (strain ATCC 204508 / S288c) (Baker's yeast)).